The primary structure comprises 47 residues: Defensin Ec-AMP-D1 (47 aa).

4 disulfide bridges follow: Cys-3–Cys-47, Cys-14–Cys-34, Cys-20–Cys-41, and Cys-24–Cys-43.

Its function is as follows. Has antifungal activity. Inhibits spore germination in F.graminearum (IC(50)=15 ug/ml), F.oxysporum (IC(50)=102 ug/ml), F.verticillioides (IC(50)=8.5 ug/ml) and D.maydis (IC(50)=12.5 ug/ml), but not in C.graminicola, B.cinerea and H.sativum at concentrations below 30 ug/ml. Inhibits hyphal development in P.infestans (IC(50)=25.5 ug/ml), but not release of zoospores. At concentrations above 100 ug/ml, induces morphological changes such as lysis of hyphae and sporangia in P.infestans. This Echinochloa crus-galli (Barnyard grass) protein is Defensin Ec-AMP-D1.